Reading from the N-terminus, the 105-residue chain is Integration host factor (105 aa).

The short motif at 64 to 71 (LPKVGKVK) is the H2TH motif, binds DNA element. Positions 82-94 (APTRRLRGLGDRQ) are lid, binds DNA.

Belongs to the actinobacterial IHF (aIHF) family. In terms of assembly, binds DNA as a monomer. (Microbial infection) Forms a complex with L5 Int and attP DNA. The complex binds attB to form products.

The protein localises to the cytoplasm. The protein resides in the nucleoid. In terms of biological role, a nucleoid-associated protein (NAP) that binds DNA without any sequence specificity. Compacts DNA. Binds along the whole chromosome in a dynamic manner, has equal affinity for the oriC site, attB and a randon 62% GC-rich sequence. Plays a role in transcription regulation. (Microbial infection) Stimulates temperate Mycobacterium phage L5 Int-mediated recombination in vitro using supercoiled attP (phage attachment site) DNA, linear attB DNA (bacterial attachment site) and L5 integrase (L5 Int or Int-L5, AC P22884). mIHF acts on L5 Int to stimulate formation of a specific intasome complex. mIHF probably stabilizes a sharp bend in the DNA during phage integration. The sequence is that of Integration host factor from Mycolicibacterium smegmatis (strain ATCC 700084 / mc(2)155) (Mycobacterium smegmatis).